A 318-amino-acid chain; its full sequence is 3'-5' exoribonuclease YhaM (318 aa).

In terms of domain architecture, HD spans 163-279 (HVVSMLDLAK…LHYIDNLDAK (117 aa)).

The protein belongs to the YhaM family.

In terms of biological role, shows a 3'-5' exoribonuclease activity. The polypeptide is 3'-5' exoribonuclease YhaM (Bacillus cytotoxicus (strain DSM 22905 / CIP 110041 / 391-98 / NVH 391-98)).